The sequence spans 831 residues: Leucine--tRNA ligase (831 aa).

The short motif at 36 to 46 (PYPSGKLHIGH) is the 'HIGH' region element. The short motif at 607–611 (KMSKS) is the 'KMSKS' region element. Residue lysine 610 participates in ATP binding.

Belongs to the class-I aminoacyl-tRNA synthetase family.

Its subcellular location is the cytoplasm. The catalysed reaction is tRNA(Leu) + L-leucine + ATP = L-leucyl-tRNA(Leu) + AMP + diphosphate. The chain is Leucine--tRNA ligase from Neorickettsia sennetsu (strain ATCC VR-367 / Miyayama) (Ehrlichia sennetsu).